The primary structure comprises 436 residues: Testican-3 (436 aa).

Residues Met1–Ala22 form the signal peptide. Disulfide bonds link Cys90-Cys101, Cys95-Cys111, Cys139-Cys169, Cys142-Cys162, Cys151-Cys183, Cys317-Cys341, Cys352-Cys359, and Cys361-Cys380. A Kazal-like domain is found at Gly133–Cys185. Residues Asp314–Cys380 enclose the Thyroglobulin type-1 domain. O-linked (Xyl...) (glycosaminoglycan) serine glycosylation is found at Ser387 and Ser392. Residues Gly393–Ile436 are disordered. Positions Thr399–Asp430 are enriched in acidic residues.

In terms of processing, contains chondroitin sulfate and heparan sulfate O-linked oligosaccharides. In terms of tissue distribution, expressed in brain.

It is found in the secreted. The protein resides in the extracellular space. Its subcellular location is the extracellular matrix. Functionally, may participate in diverse steps of neurogenesis. Inhibits the processing of pro-matrix metalloproteinase 2 (MMP-2) by MT1-MMP and MT3-MMP. May interfere with tumor invasion. In Pongo abelii (Sumatran orangutan), this protein is Testican-3 (SPOCK3).